Consider the following 520-residue polypeptide: GMP synthase [glutamine-hydrolyzing] (520 aa).

In terms of domain architecture, Glutamine amidotransferase type-1 spans 9–202; sequence TILIIDFGSQ…VHRIVGVKPG (194 aa). Catalysis depends on C86, which acts as the Nucleophile. Residues H176 and E178 contribute to the active site. In terms of domain architecture, GMPS ATP-PPase spans 203-395; it reads WTMGAYREQA…LGLPDSFIGR (193 aa). 230 to 236 contributes to the ATP binding site; sequence SGGVDSS.

Homodimer.

It carries out the reaction XMP + L-glutamine + ATP + H2O = GMP + L-glutamate + AMP + diphosphate + 2 H(+). The protein operates within purine metabolism; GMP biosynthesis; GMP from XMP (L-Gln route): step 1/1. In terms of biological role, catalyzes the synthesis of GMP from XMP. In Brucella canis (strain ATCC 23365 / NCTC 10854 / RM-666), this protein is GMP synthase [glutamine-hydrolyzing].